We begin with the raw amino-acid sequence, 452 residues long: tRNA modification GTPase MnmE (452 aa).

The (6S)-5-formyl-5,6,7,8-tetrahydrofolate site is built by R23, E80, and K119. Residues 215-374 (GIWIALVGQP…LQQGLLEMIG (160 aa)) form the TrmE-type G domain. K(+) is bound at residue N225. Residues 225–230 (NVGKSS), 244–250 (TEVPGTT), and 269–272 (DTAG) each bind GTP. S229 is a binding site for Mg(2+). K(+) contacts are provided by T244, V246, and T249. T250 is a Mg(2+) binding site. Residue K452 participates in (6S)-5-formyl-5,6,7,8-tetrahydrofolate binding.

Belongs to the TRAFAC class TrmE-Era-EngA-EngB-Septin-like GTPase superfamily. TrmE GTPase family. Homodimer. Heterotetramer of two MnmE and two MnmG subunits. Requires K(+) as cofactor.

It is found in the cytoplasm. Its function is as follows. Exhibits a very high intrinsic GTPase hydrolysis rate. Involved in the addition of a carboxymethylaminomethyl (cmnm) group at the wobble position (U34) of certain tRNAs, forming tRNA-cmnm(5)s(2)U34. This Nitrosospira multiformis (strain ATCC 25196 / NCIMB 11849 / C 71) protein is tRNA modification GTPase MnmE.